The chain runs to 202 residues: Holliday junction branch migration complex subunit RuvA (202 aa).

The domain I stretch occupies residues 1–64 (MIGYLKGQIL…YDGTVLYGFL (64 aa)). A domain II region spans residues 65–146 (TKEDKQLWAI…AVTIAGVPKI (82 aa)). Residues 147–155 (KIEGEAPFM) form a flexible linker region. The domain III stretch occupies residues 155-202 (MSEVMMALTALGYSPMEARKAIDQLYKTGLANDSVENIIRAALRILKK).

It belongs to the RuvA family. As to quaternary structure, homotetramer. Forms an RuvA(8)-RuvB(12)-Holliday junction (HJ) complex. HJ DNA is sandwiched between 2 RuvA tetramers; dsDNA enters through RuvA and exits via RuvB. An RuvB hexamer assembles on each DNA strand where it exits the tetramer. Each RuvB hexamer is contacted by two RuvA subunits (via domain III) on 2 adjacent RuvB subunits; this complex drives branch migration. In the full resolvosome a probable DNA-RuvA(4)-RuvB(12)-RuvC(2) complex forms which resolves the HJ.

The protein resides in the cytoplasm. The RuvA-RuvB-RuvC complex processes Holliday junction (HJ) DNA during genetic recombination and DNA repair, while the RuvA-RuvB complex plays an important role in the rescue of blocked DNA replication forks via replication fork reversal (RFR). RuvA specifically binds to HJ cruciform DNA, conferring on it an open structure. The RuvB hexamer acts as an ATP-dependent pump, pulling dsDNA into and through the RuvAB complex. HJ branch migration allows RuvC to scan DNA until it finds its consensus sequence, where it cleaves and resolves the cruciform DNA. This is Holliday junction branch migration complex subunit RuvA from Elusimicrobium minutum (strain Pei191).